A 1117-amino-acid chain; its full sequence is Sodium-driven chloride bicarbonate exchanger (1117 aa).

Polar residues predominate over residues 1 to 14 (MQSGTCESFQSLSH). Disordered stretches follow at residues 1-26 (MQSG…VDRG), 57-94 (GRKS…FDTP), 244-312 (KQSE…PHQQ), and 456-475 (NGTA…GPEL). Residues 1-508 (MQSGTCESFQ…DFTDALSLQC (508 aa)) lie on the Cytoplasmic side of the membrane. Residues 15–26 (QRNDEEAVVDRG) show a composition bias toward basic and acidic residues. Residues 58–75 (RKSHRRHRHRGHKHRKRD) are compositionally biased toward basic residues. Basic and acidic residues predominate over residues 76–89 (RERDSGLEDGRESP). S88 carries the phosphoserine modification. T93 bears the Phosphothreonine mark. Residues 247 to 263 (EPNSMDKNAGQVVSPQS) show a composition bias toward polar residues. Position 275 is a phosphoserine (S275). Residues 509–529 (LASFLFLYCACMSPVITFGGL) form a helical membrane-spanning segment. The Extracellular segment spans residues 530–537 (LGEATEGR). A helical transmembrane segment spans residues 538-558 (ISAIESLFGASMTGIAYSLFG). Residues 559 to 561 (GQP) are Cytoplasmic-facing. Residues 562 to 582 (LTILGSTGPVLVFEKILFKFC) traverse the membrane as a helical segment. At 583–595 (KEYGLSYLSLRAS) the chain is on the extracellular side. Residues 596–616 (IGLWTATLCIILVATDASSLV) traverse the membrane as a helical segment. The Cytoplasmic segment spans residues 617–625 (CYITRFTEE). The chain crosses the membrane as a helical span at residues 626–646 (AFASLICIIFIYEALEKLFEL). The Extracellular segment spans residues 647–719 (SEAYPINMHN…VGRACGHEHP (73 aa)). N-linked (GlcNAc...) asparagine glycans are attached at residues N673, N676, N686, and N696. The chain crosses the membrane as a helical span at residues 720–740 (YVPDVLFWSVILFFSTVTLSA). Residues 741–761 (TLKQFKTSRYFPTKVRSIVSD) lie on the Cytoplasmic side of the membrane. Residues 762–782 (FAVFLTILCMVLIDYAIGIPS) form a helical membrane-spanning segment. At 783–808 (PKLQVPSVFKPTRDDRGWFVTPLGPN) the chain is on the extracellular side. A helical transmembrane segment spans residues 809 to 829 (PWWTVIAAIIPALLCTILIFM). Residues 830 to 854 (DQQITAVIINRKEHKLKKGCGYHLD) are Cytoplasmic-facing. The helical transmembrane segment at 855–875 (LLMVAVMLGVCSIMGLPWFVA) threads the bilayer. The Extracellular segment spans residues 876–911 (ATVLSITHVNSLKLESECSAPGEQPKFLGIREQRVT). The helical transmembrane segment at 912-932 (GLMIFILMGSSVFMTSILKFI) threads the bilayer. Over 933–934 (PM) the chain is Cytoplasmic. Residues 935–955 (PVLYGVFLYMGASSLKGIQFF) form a helical membrane-spanning segment. Residues 956 to 997 (DRIKLFWMPAKHQPDFIYLRHVPLRKVHLFTVIQMSCLGLLW) are Extracellular-facing. The chain crosses the membrane as a helical span at residues 998-1018 (IIKVSRAAIVFPMMVLALVFV). At 1019–1117 (RKLMDFLFTK…SSFPSKSSPS (99 aa)) the chain is on the cytoplasmic side. A phosphoserine mark is found at S1056 and S1084.

It belongs to the anion exchanger (TC 2.A.31) family. N-glycosylated.

It is found in the basolateral cell membrane. It localises to the apical cell membrane. Its subcellular location is the cell projection. The protein localises to the dendrite. The protein resides in the axon. It is found in the perikaryon. It localises to the presynapse. Its subcellular location is the postsynapse. Sodium/bicarbonate cotransporter which plays an important role in regulating intracellular pH. Has been shown to act as a sodium/bicarbonate cotransporter in exchange for intracellular chloride. Has also been shown to act as a sodium/biocarbonate cotransporter which does not couple net influx of bicarbonate to net efflux of chloride, with the observed chloride efflux being due to chloride self-exchange. Controls neuronal pH and may contribute to the secretion of cerebrospinal fluid. Acting on presynaptic intracellular pH, it promotes GABA release, reduces the excitability of CA1 pyramidal neurons, and modulates short-term synaptic plasticity. Required in retinal cells to maintain normal pH which is necessary for normal vision. In the kidney, likely to mediate bicarbonate reclamation in the apical membrane of the proximal tubules. The protein is Sodium-driven chloride bicarbonate exchanger of Bos taurus (Bovine).